A 221-amino-acid chain; its full sequence is Vesicle-associated membrane protein 722 (221 aa).

Topologically, residues 1-196 (MAQQSLIYSF…MWFQNMKIKL (196 aa)) are cytoplasmic. In terms of domain architecture, Longin spans 10 to 114 (FVARGTVILV…SLNKEFGSKL (105 aa)). In terms of domain architecture, v-SNARE coiled-coil homology spans 130-190 (KLAKVKAQVS…TQMRRKMWFQ (61 aa)). Residues 197 to 217 (IVLAIIIALILIIILSICGGF) traverse the membrane as a helical; Anchor for type IV membrane protein segment. Residues 218 to 221 (NCGK) are Vesicular-facing.

The protein belongs to the synaptobrevin family. Highly expressed in stems and roots. Detected in flowers and leaves.

It localises to the cell membrane. The protein localises to the early endosome membrane. Functionally, involved in the targeting and/or fusion of transport vesicles to their target membrane. This Arabidopsis thaliana (Mouse-ear cress) protein is Vesicle-associated membrane protein 722.